A 755-amino-acid chain; its full sequence is Protein phosphatase 1E (755 aa).

Positions 21-131 (EFRGPCGGGE…PPLPPLPRPL (111 aa)) are disordered. Repeat copies occupy residues 31-32 (PE), 33-34 (PE), 35-36 (PE), 37-38 (PE), 39-40 (PE), 41-42 (PE), and 43-44 (PE). The tract at residues 31 to 52 (PEPEPEPEPEPEPESEPEPEPE) is 11 X 2 AA tandem repeats of P-E. Acidic residues-rich tracts occupy residues 31-68 (PEPE…EPGE) and 77-101 (EEGD…EEEG). The 8; approximate repeat unit spans residues 45–46 (SE). A run of 3 repeats spans residues 47-48 (PE), 49-50 (PE), and 51-52 (PE). A compositionally biased stretch (low complexity) spans 102–113 (AATAAAAPGHSA). A compositionally biased stretch (pro residues) spans 114–129 (VPPPPPQLPPLPPLPR). A PPM-type phosphatase domain is found at 231–488 (ETSIHAIKNM…DNITVIVVFL (258 aa)). 4 residues coordinate Mn(2+): aspartate 273, glycine 274, aspartate 435, and aspartate 479. Positions 498–537 (SEESDWTENSFQGGQEDGGDDKENHGECKRPWPQHQCSAP) are disordered. The segment covering 518–527 (DKENHGECKR) has biased composition (basic and acidic residues). Phosphoserine is present on residues serine 535 and serine 548.

This sequence belongs to the PP2C family. Heterotrimer. Interacts with PAX1 and ARHGEF6 (or ARHGEF7). Mg(2+) is required as a cofactor. The cofactor is Mn(2+).

It is found in the nucleus. The protein resides in the cytoplasm. The catalysed reaction is O-phospho-L-seryl-[protein] + H2O = L-seryl-[protein] + phosphate. The enzyme catalyses O-phospho-L-threonyl-[protein] + H2O = L-threonyl-[protein] + phosphate. In terms of biological role, protein phosphatase that inactivates multifunctional CaM kinases such as CAMK4 and CAMK2. Dephosphorylates and inactivates PAK. May play a role in the inhibition of actin fiber stress breakdown and in morphological changes driven by TNK2/CDC42. Dephosphorylates PRKAA2. In Homo sapiens (Human), this protein is Protein phosphatase 1E (PPM1E).